A 299-amino-acid chain; its full sequence is Phosphoribosylaminoimidazole-succinocarboxamide synthase (299 aa).

Belongs to the SAICAR synthetase family.

The catalysed reaction is 5-amino-1-(5-phospho-D-ribosyl)imidazole-4-carboxylate + L-aspartate + ATP = (2S)-2-[5-amino-1-(5-phospho-beta-D-ribosyl)imidazole-4-carboxamido]succinate + ADP + phosphate + 2 H(+). The protein operates within purine metabolism; IMP biosynthesis via de novo pathway; 5-amino-1-(5-phospho-D-ribosyl)imidazole-4-carboxamide from 5-amino-1-(5-phospho-D-ribosyl)imidazole-4-carboxylate: step 1/2. The protein is Phosphoribosylaminoimidazole-succinocarboxamide synthase (ade7) of Schizosaccharomyces pombe (strain 972 / ATCC 24843) (Fission yeast).